We begin with the raw amino-acid sequence, 548 residues long: Chaperonin GroEL 3 (548 aa).

Residues 30–33 (TLGP), lysine 51, 87–91 (DGTTT), glycine 415, and aspartate 496 each bind ATP.

This sequence belongs to the chaperonin (HSP60) family. In terms of assembly, forms a cylinder of 14 subunits composed of two heptameric rings stacked back-to-back. Interacts with the co-chaperonin GroES.

It localises to the cytoplasm. The catalysed reaction is ATP + H2O + a folded polypeptide = ADP + phosphate + an unfolded polypeptide.. Its function is as follows. Together with its co-chaperonin GroES, plays an essential role in assisting protein folding. The GroEL-GroES system forms a nano-cage that allows encapsulation of the non-native substrate proteins and provides a physical environment optimized to promote and accelerate protein folding. This chain is Chaperonin GroEL 3, found in Nitrobacter winogradskyi (strain ATCC 25391 / DSM 10237 / CIP 104748 / NCIMB 11846 / Nb-255).